The primary structure comprises 131 residues: Profilin-6 (131 aa).

A disulfide bridge connects residues Cys-13 and Cys-115. An Involved in PIP2 interaction motif is present at residues 81 to 97; the sequence is AVIRGKKGSGGITVKKT. The residue at position 111 (Thr-111) is a Phosphothreonine.

This sequence belongs to the profilin family. As to quaternary structure, occurs in many kinds of cells as a complex with monomeric actin in a 1:1 ratio. Phosphorylated by MAP kinases.

It localises to the cytoplasm. The protein localises to the cytoskeleton. Binds to actin and affects the structure of the cytoskeleton. At high concentrations, profilin prevents the polymerization of actin, whereas it enhances it at low concentrations. The chain is Profilin-6 from Zea mays (Maize).